Reading from the N-terminus, the 395-residue chain is Xylose isomerase (395 aa).

Catalysis depends on residues His54 and Asp57. Glu181, Glu217, His220, Asp245, Asp255, Asp257, and Asp293 together coordinate Mg(2+).

The protein belongs to the xylose isomerase family. In terms of assembly, homotetramer. The cofactor is Mg(2+).

The protein localises to the cytoplasm. It catalyses the reaction alpha-D-xylose = alpha-D-xylulofuranose. In Arthrobacter sp. (strain NRRL B3728), this protein is Xylose isomerase (xylA).